The chain runs to 333 residues: 4-hydroxyproline epimerase (333 aa).

Catalysis depends on cysteine 90, which acts as the Proton acceptor. Residues glycine 91–histidine 92 and aspartate 249 each bind substrate. Catalysis depends on cysteine 253, which acts as the Proton donor. Glycine 254–threonine 255 is a substrate binding site.

The protein belongs to the proline racemase family. As to quaternary structure, homodimer.

It catalyses the reaction trans-4-hydroxy-L-proline = cis-4-hydroxy-D-proline. Inhibited by iodoacetate, iodoacetamide and by high amounts (10 mM) of pyrrole-2-carboxylic acid (PYC). Not inhibited by PYC at 1 mM. In terms of biological role, allows intracellular utilization of 4-hydroxyproline, one of the major constituents of host collagen, by converting 4-hydroxy-L-proline to 4-hydroxy-D-proline, which can be further metabolized by intracellular 4-hydroxy-D-proline oxidases. Strong B-cell mitogen. Plays an important role in the regulation of intra- and extracellular amino acid pools, allowing the bacterium to profit from host precursors and enzymatic pathways. In Brucella melitensis biotype 1 (strain ATCC 23456 / CCUG 17765 / NCTC 10094 / 16M), this protein is 4-hydroxyproline epimerase.